A 323-amino-acid chain; its full sequence is tRNA U34 carboxymethyltransferase (323 aa).

Residues K91, W105, K110, G130, 152 to 154 (DPT), 181 to 182 (IE), M196, Y200, and R315 contribute to the carboxy-S-adenosyl-L-methionine site.

The protein belongs to the class I-like SAM-binding methyltransferase superfamily. CmoB family. Homotetramer.

The enzyme catalyses carboxy-S-adenosyl-L-methionine + 5-hydroxyuridine(34) in tRNA = 5-carboxymethoxyuridine(34) in tRNA + S-adenosyl-L-homocysteine + H(+). Functionally, catalyzes carboxymethyl transfer from carboxy-S-adenosyl-L-methionine (Cx-SAM) to 5-hydroxyuridine (ho5U) to form 5-carboxymethoxyuridine (cmo5U) at position 34 in tRNAs. This is tRNA U34 carboxymethyltransferase from Escherichia coli (strain SE11).